Reading from the N-terminus, the 439-residue chain is Trigger factor (439 aa).

Positions 162–247 (GDRLTLDFIG…LKKVEAMILP (86 aa)) constitute a PPIase FKBP-type domain.

This sequence belongs to the FKBP-type PPIase family. Tig subfamily.

It is found in the cytoplasm. It catalyses the reaction [protein]-peptidylproline (omega=180) = [protein]-peptidylproline (omega=0). Its function is as follows. Involved in protein export. Acts as a chaperone by maintaining the newly synthesized protein in an open conformation. Functions as a peptidyl-prolyl cis-trans isomerase. The sequence is that of Trigger factor from Dichelobacter nodosus (strain VCS1703A).